We begin with the raw amino-acid sequence, 908 residues long: Zinc finger CCCH domain-containing protein 41 (908 aa).

The segment covering 1 to 13 (MELSVSSPKQSVL) has biased composition (polar residues). Residues 1–124 (MELSVSSPKQ…GRGNYGSWAQ (124 aa)) are disordered. Acidic residues predominate over residues 20-34 (SDPEEEHEISEEEDD). Composition is skewed to polar residues over residues 48–59 (SQSLEQDSSDQA) and 90–105 (GQRV…SNPM). A C3H1-type zinc finger spans residues 200–228 (GIPRQRCRDFEERGFCLRGDMCPMEHGMN). Positions 333-375 (NVAPLDDSNQDAAENGCGIRDSRSTSQSVWGRMKGSNSQANSK) are disordered. The span at 356 to 373 (STSQSVWGRMKGSNSQAN) shows a compositional bias: polar residues. In terms of domain architecture, RRM spans 438-510 (RTLFVNYVPH…RFIKLWWANR (73 aa)). 3 disordered regions span residues 558–590 (PTFQ…LQQK), 629–695 (VVKR…KQRP), and 807–908 (RESN…QIHQ). Residues 559 to 588 (TFQTGGAPSSSEQPKPVVVTTSGPKVTPLQ) are compositionally biased toward polar residues. A coiled-coil region spans residues 587 to 630 (LQQKKADTLERLKETLRKKQEMLEQKRNEYRKKLATLEKQGTVV). Residues 630-647 (VKREEADEPDAKRVKLDT) are compositionally biased toward basic and acidic residues. Position 657 is a phosphoserine (S657). The span at 677–688 (AKLSTETPSPDS) shows a compositional bias: polar residues. Over residues 807–828 (RESNNNNNNSNSLSVSRDNLSS) the composition is skewed to low complexity. Residues 846–863 (KTSSTEEPENTNVSGDND) are compositionally biased toward polar residues. The span at 865 to 886 (TLDKQETKESDNDNNKSNHESI) shows a compositional bias: basic and acidic residues. Over residues 898–908 (TDEEQSEQIHQ) the composition is skewed to acidic residues.

In Arabidopsis thaliana (Mouse-ear cress), this protein is Zinc finger CCCH domain-containing protein 41.